Consider the following 72-residue polypeptide: UPF0270 protein YheU (72 aa).

Belongs to the UPF0270 family.

The polypeptide is UPF0270 protein YheU (Salmonella dublin (strain CT_02021853)).